The sequence spans 729 residues: Cytoplasmic polyadenylation element-binding protein 4 (729 aa).

Disordered stretches follow at residues 20 to 50 (FPVR…NNTA) and 78 to 133 (EKAK…KEKL). Over residues 24–35 (FHPHLQPPHHHQ) the composition is skewed to basic residues. The segment covering 83-96 (QQQEQQDPLEKQQL) has biased composition (low complexity). Phosphoserine is present on residues serine 97, serine 99, and serine 137. The tract at residues 218–324 (FGGSFSPQIG…RDHRRGLNGG (107 aa)) is disordered. Residues 232-249 (HHPHHPHFQHHHSQHQQQ) show a composition bias toward basic residues. Phosphoserine occurs at positions 252 and 255. Residues 285-300 (WSSYQSPSPTPSSSWS) are compositionally biased toward low complexity. A compositionally biased stretch (gly residues) spans 301 to 311 (PGGGGYGGWGA). The residue at position 326 (threonine 326) is a Phosphothreonine. 2 positions are modified to phosphoserine: serine 330 and serine 332. 2 RRM domains span residues 472–563 (RKVF…PWNL) and 580–662 (KTIF…PYVL). Residues 541–543 (KLY) form an RNA-binding region. 8 residues coordinate Zn(2+): cysteine 667, cysteine 675, cysteine 684, cysteine 689, cysteine 694, cysteine 697, histidine 702, and histidine 710.

It belongs to the RRM CPEB family. Interacts with TOB1. In terms of tissue distribution, highly expressed in brain, including hippocampus, amygdala, granule and Purkinje cells of the cerebellum (at protein level). Expressed in spinal cord (at protein level). Expressed in kidney, lung and heart (at protein level). Expressed in liver (at protein level). Expressed in spleen and testis (at protein level). Weakly expressed in ovary and in granular cells of dentate gyrus and the pyramidal cells of CA3 and CA1 of the hippocampus.

It localises to the cytoplasm. It is found in the cell projection. The protein localises to the dendrite. Its subcellular location is the dendritic spine. The protein resides in the postsynaptic density. It localises to the axon. It is found in the growth cone. The protein localises to the endoplasmic reticulum. Its subcellular location is the perinuclear region. Sequence-specific RNA-binding protein that binds to the cytoplasmic polyadenylation element (CPE), an uridine-rich sequence element (consensus sequence 5'-UUUUUAU-3') within the mRNA 3'-UTR. RNA binding results in a clear conformational change analogous to the Venus fly trap mechanism. Regulates activation of unfolded protein response (UPR) in the process of adaptation to ER stress in liver, by maintaining translation of CPE-regulated mRNAs in conditions in which global protein synthesis is inhibited. Required for cell cycle progression, specifically for cytokinesis and chromosomal segregation. Plays a role as an oncogene promoting tumor growth and progression by positively regulating translation of t-plasminogen activator/PLAT. Stimulates proliferation of melanocytes. In contrast to CPEB1 and CPEB3, does not play role in synaptic plasticity, learning and memory. This Mus musculus (Mouse) protein is Cytoplasmic polyadenylation element-binding protein 4 (Cpeb4).